We begin with the raw amino-acid sequence, 32 residues long: Ranatuerin-2Lb (32 aa).

A disulfide bridge connects residues C27 and C32.

In terms of tissue distribution, expressed by the skin glands.

The protein resides in the secreted. Antibacterial activity against Gram-positive bacterium S.aureus and Gram-negative bacterium E.coli. Has activity against C.albicans. The protein is Ranatuerin-2Lb of Rana luteiventris (Columbia spotted frog).